The chain runs to 348 residues: Probable tRNA pseudouridine synthase B (348 aa).

D93 serves as the catalytic Nucleophile. In terms of domain architecture, PUA spans 260–335 (LKKIYILDSA…IAVDIERVFM (76 aa)).

Belongs to the pseudouridine synthase TruB family. Type 2 subfamily.

The enzyme catalyses uridine(55) in tRNA = pseudouridine(55) in tRNA. In terms of biological role, could be responsible for synthesis of pseudouridine from uracil-55 in the psi GC loop of transfer RNAs. This Nanoarchaeum equitans (strain Kin4-M) protein is Probable tRNA pseudouridine synthase B.